The chain runs to 244 residues: 7-cyano-7-deazaguanine synthase (244 aa).

14–24 contacts ATP; sequence FSGGQDSATCV. The Zn(2+) site is built by cysteine 202, cysteine 217, cysteine 220, and cysteine 223.

This sequence belongs to the QueC family. The cofactor is Zn(2+).

It catalyses the reaction 7-carboxy-7-deazaguanine + NH4(+) + ATP = 7-cyano-7-deazaguanine + ADP + phosphate + H2O + H(+). It functions in the pathway purine metabolism; 7-cyano-7-deazaguanine biosynthesis. In terms of biological role, catalyzes the ATP-dependent conversion of 7-carboxy-7-deazaguanine (CDG) to 7-cyano-7-deazaguanine (preQ(0)). The polypeptide is 7-cyano-7-deazaguanine synthase (Burkholderia lata (strain ATCC 17760 / DSM 23089 / LMG 22485 / NCIMB 9086 / R18194 / 383)).